Here is a 348-residue protein sequence, read N- to C-terminus: Heat-inducible transcription repressor HrcA (348 aa).

Belongs to the HrcA family.

Its function is as follows. Negative regulator of class I heat shock genes (grpE-dnaK-dnaJ and groELS operons). Prevents heat-shock induction of these operons. This chain is Heat-inducible transcription repressor HrcA, found in Syntrophobacter fumaroxidans (strain DSM 10017 / MPOB).